The chain runs to 611 residues: MTKVAVEKEEPGVVYKVAGSLVIAENMSGTRMYELAKVGWNKLVGEIIRLEGNYAYIQVYEDTSGLSVGDPVIKTGNALSVELGPGILDNIYDGIQRPLERIANVCGDVYIYKGIDMTSLDHDKQWQFYADKKLKLNDIVTGGDIFGFVDENKLFKEHKIMAPPNAKGRLTYIAPDGSYTLKDKIFELEYQGKKYTYGLSHLWPVRDPRPVLEKVTGDTLLLTGQRVLDSLFPTVQGGTCAIPGAFGCGKTCVSQALSKYSNSEVIIYVGCGERGNEMAEILSDFPELTTKVDNEDVGIMQRTCLVANTSNMPVAAREASIYTGITLCEYFRDMGYNATMMADSTSRWAEALREISGRLAEMPADSGYPAYLGARLASFYERAGKVKCIGSPSRIGSITIVGAVSPPGGDFSDPVTTATMSIVQAFWGLDKKLAQRKHFPSVNWSTSFSKYVRQLEQYFDNFDQDFLSLRQKISDILQQESDLNDIVQLVGKDSLSEDQKVVMEVAKIIREDFLQQNAFSDYDYMCPLQKTVGMMRIICHFYAQCLRTLQEYDSRERKIGWGSIYNTLRPTINKITHMKFENPKNSDEYFKKYFKALEEEITVGLRNLMEK.

Residue 244–251 (GAFGCGKT) participates in ATP binding.

Belongs to the ATPase alpha/beta chains family. V-ATPase is a heteromultimeric enzyme made up of two complexes: the ATP-hydrolytic V1 complex and the proton translocation V0 complex. The V1 complex consists of three catalytic AB heterodimers that form a heterohexamer, three peripheral stalks each consisting of EG heterodimers, one central rotor including subunits D and F, and the regulatory subunits C and H. The proton translocation complex V0 consists of the proton transport subunit a, a ring of proteolipid subunits c9c'', rotary subunit d and subunit e.

It is found in the cell membrane. The protein localises to the vacuole. It localises to the vesicle. It catalyses the reaction ATP + H2O + 4 H(+)(in) = ADP + phosphate + 5 H(+)(out). With respect to regulation, ATP hydrolysis occurs at the interface between the nucleotide-binding domains of subunits A and B. ATP hydrolysis triggers a conformational change in the subunits D and F, which induces a shift of subunit d. The c-ring is subsequently rotated and results in a continuous proton translocation across the membrane. In terms of biological role, catalytic subunit of the V1 complex of vacuolar(H+)-ATPase (V-ATPase), a multisubunit enzyme composed of a peripheral complex (V1) that hydrolyzes ATP and a membrane integral complex (V0) that translocates protons. V-ATPase is responsible for acidifying and maintaining the pH of intracellular compartments and in some cell types, is targeted to the plasma membrane, where it is responsible for acidifying the extracellular environment. During the trophozoite stage, involved in the acidification of the extracellular space next to the cell membrane. This is V-type proton ATPase catalytic subunit A from Plasmodium falciparum (isolate 3D7).